The sequence spans 188 residues: Elongation factor P (188 aa).

Belongs to the elongation factor P family.

The protein localises to the cytoplasm. It functions in the pathway protein biosynthesis; polypeptide chain elongation. Involved in peptide bond synthesis. Stimulates efficient translation and peptide-bond synthesis on native or reconstituted 70S ribosomes in vitro. Probably functions indirectly by altering the affinity of the ribosome for aminoacyl-tRNA, thus increasing their reactivity as acceptors for peptidyl transferase. In Bacteroides thetaiotaomicron (strain ATCC 29148 / DSM 2079 / JCM 5827 / CCUG 10774 / NCTC 10582 / VPI-5482 / E50), this protein is Elongation factor P.